The primary structure comprises 395 residues: Elongation factor Tu (395 aa).

The region spanning 10-204 is the tr-type G domain; the sequence is KPHVNIGTIG…IVDEYIPTPE (195 aa). The interval 19-26 is G1; it reads GHVDHGKT. 19–26 is a binding site for GTP; sequence GHVDHGKT. Residue Thr26 participates in Mg(2+) binding. Residues 60 to 64 are G2; sequence GITIN. The segment at 81–84 is G3; it reads DAPG. Residues 81–85 and 136–139 contribute to the GTP site; these read DAPGH and NKAD. The interval 136–139 is G4; sequence NKAD. The tract at residues 174–176 is G5; sequence SAL.

The protein belongs to the TRAFAC class translation factor GTPase superfamily. Classic translation factor GTPase family. EF-Tu/EF-1A subfamily. As to quaternary structure, monomer.

The protein localises to the cytoplasm. The catalysed reaction is GTP + H2O = GDP + phosphate + H(+). Functionally, GTP hydrolase that promotes the GTP-dependent binding of aminoacyl-tRNA to the A-site of ribosomes during protein biosynthesis. This is Elongation factor Tu from Lactococcus lactis subsp. lactis (strain IL1403) (Streptococcus lactis).